Consider the following 204-residue polypeptide: UPF0637 protein SAS1041 (204 aa).

The protein belongs to the UPF0637 family.

The polypeptide is UPF0637 protein SAS1041 (Staphylococcus aureus (strain MSSA476)).